The primary structure comprises 1049 residues: Toll-like receptor 7 (1049 aa).

An N-terminal signal peptide occupies residues 1–26; that stretch reads MVFPMWTLKRQILILFNIILISKLLG. Residues 27 to 839 are Extracellular-facing; that stretch reads ARWFPKTLPC…LYTCELDLTN (813 aa). LRR repeat units follow at residues 43 to 64, 65 to 87, 110 to 126, 127 to 149, 151 to 170, and 171 to 195; these read PKNH…GGIP, TNTT…SFHR, NMCI…FSGL, TYLK…LPPS, QLLS…NLTE, and LANI…SYSI. 2 N-linked (GlcNAc...) asparagine glycosylation sites follow: N66 and N69. Residue N167 is glycosylated (N-linked (GlcNAc...) asparagine). N-linked (GlcNAc...) asparagine glycosylation is found at N202 and N215. LRR repeat units follow at residues 203 to 226, 228 to 247, 248 to 275, 289 to 312, 314 to 337, 339 to 368, 369 to 392, 396 to 419, and 421 to 443; these read LTKL…LPST, TELY…DFNN, LNQL…PCKN, LTEL…WFKN, NKLQ…KFLH, LPSL…AFSS, LKSL…NLSP, LQNL…MFKQ, and KRLK…SEVG. A glycan (N-linked (GlcNAc...) asparagine) is linked at N361. N-linked (GlcNAc...) asparagine glycosylation is present at N413. Residue N488 is glycosylated (N-linked (GlcNAc...) asparagine). LRR repeat units follow at residues 492-515, 516-540, 541-564, and 566-588; these read YKYG…DFQH, LSFL…EFQP, LAEL…AFEE, and HKLE…ITHM. N523 and N534 each carry an N-linked (GlcNAc...) asparagine glycan. N-linked (GlcNAc...) asparagine glycosylation occurs at N590. LRR repeat units lie at residues 595–618, 619–644, 649–672, 674–697, 698–721, 723–745, 746–769, and 772–795; these read LKVL…TMES, ESLR…RYLQ, LLKL…VFDG, PPNL…KLQC, LKNL…LSNC, RSLK…FLQD, AFQL…SFPE, and LNNL…VWFV. N-linked (GlcNAc...) asparagine glycans are attached at residues N679 and N720. The N-linked (GlcNAc...) asparagine glycan is linked to N799. The helical transmembrane segment at 840–860 threads the bilayer; it reads LILFSLSISVSLFLMVMMTAS. Topologically, residues 861–1049 are cytoplasmic; that stretch reads HLYFWDVWYI…AYSQVFKETV (189 aa). The TIR domain maps to 889–1033; sequence CCYDAFIVYD…YFWQCLKNAL (145 aa).

Belongs to the Toll-like receptor family. In terms of assembly, homodimer. Interacts with MYD88 via their respective TIR domains. Interacts with UNC93B1. Interacts with SMPDL3B. Detected in brain, placenta, spleen, stomach, small intestine, lung and in plasmacytoid pre-dendritic cells. Expressed in peripheral mononuclear blood cells.

Its subcellular location is the endoplasmic reticulum membrane. The protein localises to the endosome. It is found in the lysosome. The protein resides in the cytoplasmic vesicle. It localises to the phagosome. With respect to regulation, activated by guanosine analogs including deoxyguanosine, 7-thia-8-oxoguanosine or 7-deazaguanosine in a RNA-independent manner. Activated by imiquimod. Functionally, endosomal receptor that plays a key role in innate and adaptive immunity. Controls host immune response against pathogens through recognition of uridine-containing single strand RNAs (ssRNAs) of viral origin or guanosine analogs. Upon binding to agonists, undergoes dimerization that brings TIR domains from the two molecules into direct contact, leading to the recruitment of TIR-containing downstream adapter MYD88 through homotypic interaction. In turn, the Myddosome signaling complex is formed involving IRAK4, IRAK1, TRAF6, TRAF3 leading to activation of downstream transcription factors NF-kappa-B and IRF7 to induce pro-inflammatory cytokines and interferons, respectively. In plasmacytoid dendritic cells, RNASET2 endonuclease cooperates with PLD3 or PLD4 5'-&gt;3' exonucleases to process RNA and release 2',3'-cyclic guanosine monophosphate (2',3'-cGMP) and cytidine-rich RNA fragments that occupy TLR7 ligand-binding pockets and trigger a signaling-competent state. The sequence is that of Toll-like receptor 7 from Homo sapiens (Human).